Consider the following 147-residue polypeptide: Hemoglobin subunit beta-3 (147 aa).

The 146-residue stretch at 2–147 folds into the Globin domain; that stretch reads EWTDAERTAI…VTSALSRQYH (146 aa). Heme b contacts are provided by H63 and H92.

It belongs to the globin family. As to quaternary structure, heterotetramer of two alpha chains and two beta chains. Red blood cells.

In terms of biological role, involved in oxygen transport from gills to the various peripheral tissues. The sequence is that of Hemoglobin subunit beta-3 (hbb3) from Muraena helena (Mediterranean moray).